The chain runs to 194 residues: E3 ubiquitin-protein ligase RNF185 (194 aa).

A compositionally biased stretch (low complexity) spans 1–27 (MASAAASESSSSSSSSSAGAANGQSAG). Positions 1–32 (MASAAASESSSSSSSSSAGAANGQSAGESGGG) are disordered. A required for ubiquitin ligase activity and protection against ER stress-induced cell death region spans residues 31 to 82 (GGGAQDSTFECNICLDTSKDAVISLCGHLFCWPCLHQWLETRPNRQVCPVCK). The segment at 41–82 (CNICLDTSKDAVISLCGHLFCWPCLHQWLETRPNRQVCPVCK) adopts an RING-type zinc-finger fold. The disordered stretch occupies residues 92–126 (PLYGRGSTGQQDPREKTPPRPQGQRPEPENRGGFQ). 2 consecutive transmembrane segments (helical) span residues 133–153 (GGFQ…ATAF) and 174–194 (QFLS…LLIA).

The protein resides in the mitochondrion outer membrane. It localises to the endoplasmic reticulum membrane. It carries out the reaction S-ubiquitinyl-[E2 ubiquitin-conjugating enzyme]-L-cysteine + [acceptor protein]-L-lysine = [E2 ubiquitin-conjugating enzyme]-L-cysteine + N(6)-ubiquitinyl-[acceptor protein]-L-lysine.. It participates in protein modification; protein ubiquitination. E3 ubiquitin-protein ligase that regulates selective mitochondrial autophagy by mediating 'Lys-63'-linked polyubiquitination. Acts in the endoplasmic reticulum (ER)-associated degradation (ERAD) pathway, which targets misfolded proteins that accumulate in the endoplasmic reticulum (ER) for ubiquitination and subsequent proteasome-mediated degradation. Protects cells from ER stress-induced apoptosis. Responsible for the cotranslational ubiquitination and degradation of CFTR in the ERAD pathway. Also acts as a regulator of the innate antiviral response by catalyzing 'Lys-27'-linked polyubiquitination of CGAS, thereby promoting CGAS cyclic GMP-AMP synthase activity. Preferentially associates with the E2 enzymes UBE2J1 and UBE2J2. This chain is E3 ubiquitin-protein ligase RNF185 (rnf185), found in Danio rerio (Zebrafish).